The sequence spans 190 residues: Major sperm protein 32 (190 aa).

The 118-residue stretch at 72–189 folds into the MSP domain; that stretch reads MIQTQPGTKI…RRKNLPIEYN (118 aa).

Sperm.

The protein resides in the cell projection. Its subcellular location is the pseudopodium. It is found in the cytoplasm. It localises to the cytoskeleton. Central component in molecular interactions underlying sperm crawling. Forms an extensive filament system that extends from sperm villipoda, along the leading edge of the pseudopod. The polypeptide is Major sperm protein 32 (msp-32) (Caenorhabditis elegans).